The sequence spans 475 residues: Ribulose bisphosphate carboxylase large chain (475 aa).

Positions 1–2 (MS) are excised as a propeptide. Proline 3 is subject to N-acetylproline. Lysine 14 is modified (N6,N6,N6-trimethyllysine). Residues asparagine 123 and threonine 173 each coordinate substrate. The active-site Proton acceptor is lysine 175. Lysine 177 contacts substrate. Lysine 201, aspartate 203, and glutamate 204 together coordinate Mg(2+). N6-carboxylysine is present on lysine 201. Histidine 294 serves as the catalytic Proton acceptor. Arginine 295, histidine 327, and serine 379 together coordinate substrate.

This sequence belongs to the RuBisCO large chain family. Type I subfamily. As to quaternary structure, heterohexadecamer of 8 large chains and 8 small chains; disulfide-linked. The disulfide link is formed within the large subunit homodimers. Mg(2+) is required as a cofactor. Post-translationally, the disulfide bond which can form in the large chain dimeric partners within the hexadecamer appears to be associated with oxidative stress and protein turnover.

Its subcellular location is the plastid. The protein localises to the chloroplast. The enzyme catalyses 2 (2R)-3-phosphoglycerate + 2 H(+) = D-ribulose 1,5-bisphosphate + CO2 + H2O. It catalyses the reaction D-ribulose 1,5-bisphosphate + O2 = 2-phosphoglycolate + (2R)-3-phosphoglycerate + 2 H(+). Functionally, ruBisCO catalyzes two reactions: the carboxylation of D-ribulose 1,5-bisphosphate, the primary event in carbon dioxide fixation, as well as the oxidative fragmentation of the pentose substrate in the photorespiration process. Both reactions occur simultaneously and in competition at the same active site. This Anthoceros angustus (Hornwort) protein is Ribulose bisphosphate carboxylase large chain.